Here is a 384-residue protein sequence, read N- to C-terminus: MVEDKKTDDYTIEMDKMDQGSKNFEAAAPPPQPRTPPAGSISNNPILPVLAYCGSSILMTVMNKYVLSGLDFNLNFFLLCVQSIVCIVAIQTCKSCGLITYRDFSADEARKWFPITLLLIGMIYTGSKALQFLSIPVYTIFKNLTIILIAYGEVLWFGGSVTGLTLFSFGLMVLSSIIAAWADIKHAVESTGDATAKVSTLNAGYIWMLVNCLCTSSYVLGMRKRIKLTNFKDFDTLAMFYNNLLSIPVLIVLTGLMEDWSSANITRNFPPADRNNIIFAMILSGLSSVFISYTSAWCVRVTSSTTYSMVGALNKLPIALSGLIFFDAPVTFPSVSAIVVGFVSGIVYAVAKIKQNAKPKTGVLPMSNPPVSASSQSMRDSLRS.

The Cytoplasmic segment spans residues 1-40; that stretch reads MVEDKKTDDYTIEMDKMDQGSKNFEAAAPPPQPRTPPAGS. A helical membrane pass occupies residues 41–61; sequence ISNNPILPVLAYCGSSILMTV. At 62–69 the chain is on the lumenal side; it reads MNKYVLSG. Residues 70-90 form a helical membrane-spanning segment; the sequence is LDFNLNFFLLCVQSIVCIVAI. Topologically, residues 91 to 110 are cytoplasmic; the sequence is QTCKSCGLITYRDFSADEAR. Residues 111–127 traverse the membrane as a helical segment; sequence KWFPITLLLIGMIYTGS. The Lumenal segment spans residues 128–134; that stretch reads KALQFLS. The helical transmembrane segment at 135–151 threads the bilayer; sequence IPVYTIFKNLTIILIAY. Topologically, residues 152–160 are cytoplasmic; it reads GEVLWFGGS. A helical transmembrane segment spans residues 161–182; sequence VTGLTLFSFGLMVLSSIIAAWA. The Lumenal portion of the chain corresponds to 183–200; it reads DIKHAVESTGDATAKVST. The chain crosses the membrane as a helical span at residues 201-221; sequence LNAGYIWMLVNCLCTSSYVLG. Residues 222–236 lie on the Cytoplasmic side of the membrane; the sequence is MRKRIKLTNFKDFDT. The chain crosses the membrane as a helical span at residues 237 to 257; that stretch reads LAMFYNNLLSIPVLIVLTGLM. Residues 258 to 276 are Lumenal-facing; it reads EDWSSANITRNFPPADRNN. A glycan (N-linked (GlcNAc...) asparagine) is linked at Asn-264. A helical membrane pass occupies residues 277–297; that stretch reads IIFAMILSGLSSVFISYTSAW. Residues 298–305 lie on the Cytoplasmic side of the membrane; sequence CVRVTSST. The chain crosses the membrane as a helical span at residues 306 to 326; sequence TYSMVGALNKLPIALSGLIFF. The Lumenal segment spans residues 327–329; that stretch reads DAP. Residues 330–350 form a helical membrane-spanning segment; the sequence is VTFPSVSAIVVGFVSGIVYAV. Residues 351–384 lie on the Cytoplasmic side of the membrane; it reads AKIKQNAKPKTGVLPMSNPPVSASSQSMRDSLRS. Positions 364 to 384 are disordered; sequence LPMSNPPVSASSQSMRDSLRS. Over residues 369-384 the composition is skewed to polar residues; the sequence is PPVSASSQSMRDSLRS.

Belongs to the TPT transporter family. SLC35D subfamily. Homooligomer.

It is found in the golgi apparatus membrane. It localises to the cytoplasmic vesicle membrane. The protein localises to the endoplasmic reticulum membrane. Involved in the import of GDP-mannose from the cytoplasm into the Golgi lumen. The polypeptide is GDP-mannose transporter (gmt1) (Aspergillus terreus (strain NIH 2624 / FGSC A1156)).